Reading from the N-terminus, the 223-residue chain is MEVKDILKTVDHTLLATTATWPEIQTILDDAMAYETASACIPASYVKKAAEYVSGKLAICTVIGFPNGYSTTAAKVFECEDAIQNGADEIDMVINLTDVKNGDFDTVEEEIRQIKAKCQDHILKVIVETCQLTKEELIELCGVVTRSGADFIKTSTGFSTAGATFEDVEVMAKYVGEGVKIKAAGGISSLEDAKTFIALGASRLGTSRIIKIVKNEATKTDSY.

The Proton donor/acceptor role is filled by aspartate 91. The active-site Schiff-base intermediate with acetaldehyde is the lysine 153. The active-site Proton donor/acceptor is lysine 182.

Belongs to the DeoC/FbaB aldolase family. DeoC type 1 subfamily.

It is found in the cytoplasm. The enzyme catalyses 2-deoxy-D-ribose 5-phosphate = D-glyceraldehyde 3-phosphate + acetaldehyde. It functions in the pathway carbohydrate degradation; 2-deoxy-D-ribose 1-phosphate degradation; D-glyceraldehyde 3-phosphate and acetaldehyde from 2-deoxy-alpha-D-ribose 1-phosphate: step 2/2. Its function is as follows. Catalyzes a reversible aldol reaction between acetaldehyde and D-glyceraldehyde 3-phosphate to generate 2-deoxy-D-ribose 5-phosphate. This is Deoxyribose-phosphate aldolase from Streptococcus pyogenes serotype M2 (strain MGAS10270).